A 246-amino-acid chain; its full sequence is Small ribosomal subunit protein uS3A (246 aa).

The 72-residue stretch at Leu21–Ala92 folds into the KH type-2 domain. The disordered stretch occupies residues Asp215–Ala246.

It belongs to the universal ribosomal protein uS3 family.

It localises to the cytoplasm. The protein localises to the nucleus. It is found in the nucleolus. Its subcellular location is the mitochondrion inner membrane. The protein resides in the cytoskeleton. It localises to the spindle. It carries out the reaction 2'-deoxyribonucleotide-(2'-deoxyribose 5'-phosphate)-2'-deoxyribonucleotide-DNA = a 3'-end 2'-deoxyribonucleotide-(2,3-dehydro-2,3-deoxyribose 5'-phosphate)-DNA + a 5'-end 5'-phospho-2'-deoxyribonucleoside-DNA + H(+). In terms of biological role, component of the small ribosomal subunit. The ribosome is a large ribonucleoprotein complex responsible for the synthesis of proteins in the cell. Has endonuclease activity and plays a role in repair of damaged DNA. Also involved in other processes including regulation of transcription, translation of its cognate mRNA, spindle formation and chromosome movement during mitosis, and apoptosis. The sequence is that of Small ribosomal subunit protein uS3A (rps3-a) from Xenopus laevis (African clawed frog).